Reading from the N-terminus, the 200-residue chain is ATP-dependent Clp protease proteolytic subunit 2 (200 aa).

The active-site Nucleophile is the S99. H123 is a catalytic residue.

It belongs to the peptidase S14 family. In terms of assembly, fourteen ClpP subunits assemble into 2 heptameric rings which stack back to back to give a disk-like structure with a central cavity, resembling the structure of eukaryotic proteasomes.

It localises to the cytoplasm. The catalysed reaction is Hydrolysis of proteins to small peptides in the presence of ATP and magnesium. alpha-casein is the usual test substrate. In the absence of ATP, only oligopeptides shorter than five residues are hydrolyzed (such as succinyl-Leu-Tyr-|-NHMec, and Leu-Tyr-Leu-|-Tyr-Trp, in which cleavage of the -Tyr-|-Leu- and -Tyr-|-Trp bonds also occurs).. Functionally, cleaves peptides in various proteins in a process that requires ATP hydrolysis. Has a chymotrypsin-like activity. Plays a major role in the degradation of misfolded proteins. This is ATP-dependent Clp protease proteolytic subunit 2 from Symbiobacterium thermophilum (strain DSM 24528 / JCM 14929 / IAM 14863 / T).